We begin with the raw amino-acid sequence, 185 residues long: Serine/arginine-rich splicing factor RSZ21 (185 aa).

In terms of domain architecture, RRM spans 2-73 (ARLYVGNLDP…WRVELSRNSS (72 aa)). A CCHC-type zinc finger spans residues 86-103 (MKCYECGETGHFARECRL). Residues 104-185 (RIGPGGLGSG…DGGRYRRSRS (82 aa)) are disordered. Residues 113–123 (GKRRSRSRSRS) are compositionally biased toward basic residues. 2 stretches are compositionally biased toward low complexity: residues 124-138 (RSPQYRKSPTYGRRS) and 151-162 (VSPVRGRSYSRS).

This sequence belongs to the splicing factor SR family. In terms of processing, extensively phosphorylated on serine residues in the RS domain. Expressed in roots, leaves and immature seeds.

The protein resides in the nucleus. In terms of biological role, involved in pre-mRNA splicing. The chain is Serine/arginine-rich splicing factor RSZ21 (RSZP21) from Oryza sativa subsp. japonica (Rice).